A 281-amino-acid chain; its full sequence is 2-dehydro-3-deoxyphosphooctonate aldolase (281 aa).

It belongs to the KdsA family.

Its subcellular location is the cytoplasm. It catalyses the reaction D-arabinose 5-phosphate + phosphoenolpyruvate + H2O = 3-deoxy-alpha-D-manno-2-octulosonate-8-phosphate + phosphate. It participates in carbohydrate biosynthesis; 3-deoxy-D-manno-octulosonate biosynthesis; 3-deoxy-D-manno-octulosonate from D-ribulose 5-phosphate: step 2/3. Its pathway is bacterial outer membrane biogenesis; lipopolysaccharide biosynthesis. This Pseudomonas savastanoi pv. phaseolicola (strain 1448A / Race 6) (Pseudomonas syringae pv. phaseolicola (strain 1448A / Race 6)) protein is 2-dehydro-3-deoxyphosphooctonate aldolase.